Here is a 352-residue protein sequence, read N- to C-terminus: 4-hydroxy-2-oxovalerate aldolase (352 aa).

The 253-residue stretch at 13-265 (VRLTDTSLRD…KTGIDFFDIA (253 aa)) folds into the Pyruvate carboxyltransferase domain. 21–22 (RD) is a substrate binding site. Asp22 provides a ligand contact to Mn(2+). His25 (proton acceptor) is an active-site residue. Substrate is bound by residues Ser175 and His204. Mn(2+) is bound by residues His204 and His206. Tyr295 provides a ligand contact to substrate.

This sequence belongs to the 4-hydroxy-2-oxovalerate aldolase family.

It carries out the reaction (S)-4-hydroxy-2-oxopentanoate = acetaldehyde + pyruvate. The polypeptide is 4-hydroxy-2-oxovalerate aldolase (Mycobacterium avium (strain 104)).